A 210-amino-acid polypeptide reads, in one-letter code: Large ribosomal subunit protein bL25 (210 aa).

Positions 190-210 (LKSEGAEGGEAEAGQAEEGEE) are disordered. Over residues 196 to 210 (EGGEAEAGQAEEGEE) the composition is skewed to acidic residues.

This sequence belongs to the bacterial ribosomal protein bL25 family. CTC subfamily. As to quaternary structure, part of the 50S ribosomal subunit; part of the 5S rRNA/L5/L18/L25 subcomplex. Contacts the 5S rRNA. Binds to the 5S rRNA independently of L5 and L18.

In terms of biological role, this is one of the proteins that binds to the 5S RNA in the ribosome where it forms part of the central protuberance. The sequence is that of Large ribosomal subunit protein bL25 from Chelativorans sp. (strain BNC1).